The sequence spans 566 residues: Urease subunit alpha (566 aa).

The Urease domain maps to 128–566 (GGIDTHIHFI…LPMAQRYFLF (439 aa)). Positions 133, 135, and 216 each coordinate Ni(2+). Position 216 is an N6-carboxylysine (K216). H218 contributes to the substrate binding site. Ni(2+) is bound by residues H245 and H271. Residue H319 is the Proton donor of the active site. Residue D359 participates in Ni(2+) binding.

Belongs to the metallo-dependent hydrolases superfamily. Urease alpha subunit family. Heterotrimer of UreA (gamma), UreB (beta) and UreC (alpha) subunits. Three heterotrimers associate to form the active enzyme. The cofactor is Ni cation. In terms of processing, carboxylation allows a single lysine to coordinate two nickel ions.

It is found in the cytoplasm. It carries out the reaction urea + 2 H2O + H(+) = hydrogencarbonate + 2 NH4(+). It functions in the pathway nitrogen metabolism; urea degradation; CO(2) and NH(3) from urea (urease route): step 1/1. This is Urease subunit alpha from Pseudomonas fluorescens (strain Pf0-1).